We begin with the raw amino-acid sequence, 788 residues long: Cadherin-related family member 4 (788 aa).

An N-terminal signal peptide occupies residues 1 to 16 (MVLLRLLVFLFAPVVS). The Extracellular segment spans residues 17-686 (DLCSLPCFIN…DTEAFWQPQP (670 aa)). 4 consecutive Cadherin domains span residues 237–338 (LEQA…PPRC), 339–449 (LPAL…APRT), 444–554 (ACAP…EPPF), and 551–674 (EPPF…TPML). N242 carries N-linked (GlcNAc...) asparagine glycosylation. The helical transmembrane segment at 687 to 707 (WFVVVLTATGALLLLALGWLL) threads the bilayer. Residues 708–788 (GRLLQGLAQL…NTHTGARRWL (81 aa)) are Cytoplasmic-facing.

It localises to the membrane. In terms of biological role, cadherins are calcium-dependent cell adhesion proteins. They preferentially interact with themselves in a homophilic manner in connecting cells; cadherins may thus contribute to the sorting of heterogeneous cell types. The protein is Cadherin-related family member 4 (CDHR4) of Homo sapiens (Human).